Consider the following 347-residue polypeptide: Very-long-chain 3-oxoacyl-CoA reductase (347 aa).

The helical transmembrane segment at 20–40 threads the bilayer; sequence LLWVVFGLGVLKCTTLSLRFL. Residues Val66, Asp120, Asn147, Tyr223, Lys227, Val256, and Ser258 each contribute to the NADP(+) site. Tyr223 acts as the Proton donor in catalysis. Residue Lys227 is the Lowers pKa of active site Tyr of the active site.

The protein belongs to the short-chain dehydrogenases/reductases (SDR) family. Interacts with the fatty acid elongation system components ELO3 and TSC13.

The protein resides in the endoplasmic reticulum membrane. The enzyme catalyses a very-long-chain (3R)-3-hydroxyacyl-CoA + NADP(+) = a very-long-chain 3-oxoacyl-CoA + NADPH + H(+). The protein operates within lipid metabolism; fatty acid biosynthesis. Component of the microsomal membrane bound fatty acid elongation system, which produces the 26-carbon very long-chain fatty acids (VLCFA) from palmitate. Catalyzes the reduction of the 3-ketoacyl-CoA intermediate that is formed in each cycle of fatty acid elongation. VLCFAs serve as precursors for ceramide and sphingolipids. This chain is Very-long-chain 3-oxoacyl-CoA reductase, found in Saccharomyces cerevisiae (strain RM11-1a) (Baker's yeast).